The sequence spans 102 residues: Small ribosomal subunit protein uS10 (102 aa).

The protein belongs to the universal ribosomal protein uS10 family. In terms of assembly, part of the 30S ribosomal subunit.

Functionally, involved in the binding of tRNA to the ribosomes. This is Small ribosomal subunit protein uS10 from Nocardioides sp. (strain ATCC BAA-499 / JS614).